The following is a 529-amino-acid chain: MLSKEGDFSKEQRERLSHFVTNLDSPIFALKNLPEVVKGALFSKYSRSILGLRALLLKEFLDGEGGDFLSEDLQDCELGIQKAADFYRRVLDNFGDDSVGELGGAHLAIEQVSMLAAKVLEDARIGGSPLEKSSRYVYFDQKVNGEYLYYRDPILMTSAFKDTFLDTCDFLFNTYSELIPQVRAYFEKIYPKDPEVSQSAYTVSLRAKVLDCLRGLLPAATLTNLGFFGNGRFWQNLLHRLQDNNLVEVRNIGEQALTELMKIIPSFVSRAEPHHHHHQAMVDYHLGLREQLKSFAQRYGEEREPSLEKGVKLVYGDPDGLYKIAAASMFPYSEHTYADLLDICRKIPDEDLMLILESSASSRENRRHKSPRGLECAEFAFDITADFGAYRDLQRHRILTQERQLLTTKLGYSIPQQLLDTPMEAPFREAMEKADQAYRLIAAEFPEEAQYVVPLAYNIRWLFHINTRGLQWLCELRSQPQGHESYRQIAIDMAKEVIQFHPAYKSFLKFVDYSETDLGRLKQESRRKA.

ThyX domains lie at lysine 38–histidine 274 and lysine 309–valine 511.

It belongs to the UPF0159 family.

This is UPF0159 protein TC_0921 from Chlamydia muridarum (strain MoPn / Nigg).